We begin with the raw amino-acid sequence, 472 residues long: Exodeoxyribonuclease 7 large subunit (472 aa).

Belongs to the XseA family. As to quaternary structure, heterooligomer composed of large and small subunits.

The protein resides in the cytoplasm. It catalyses the reaction Exonucleolytic cleavage in either 5'- to 3'- or 3'- to 5'-direction to yield nucleoside 5'-phosphates.. In terms of biological role, bidirectionally degrades single-stranded DNA into large acid-insoluble oligonucleotides, which are then degraded further into small acid-soluble oligonucleotides. In Carboxydothermus hydrogenoformans (strain ATCC BAA-161 / DSM 6008 / Z-2901), this protein is Exodeoxyribonuclease 7 large subunit.